The primary structure comprises 295 residues: Structure-specific endonuclease subunit SLX1 (295 aa).

The GIY-YIG domain occupies 11 to 93 (EFYGVYILQS…QHPKTSRHMA (83 aa)). A disordered region spans residues 85-133 (HPKTSRHMAGGGGSVTATAETAKSAPVAGKSDATSPAKNRRNAAPVARS). The SLX1-type zinc-finger motif lies at 205 to 272 (CCLCSDAIDY…IPSDVSCSQC (68 aa)).

It belongs to the SLX1 family. In terms of assembly, forms a heterodimer with SLX4. Requires a divalent metal cation as cofactor.

The protein resides in the nucleus. Functionally, catalytic subunit of the SLX1-SLX4 structure-specific endonuclease that resolves DNA secondary structures generated during DNA repair and recombination. Has endonuclease activity towards branched DNA substrates, introducing single-strand cuts in duplex DNA close to junctions with ss-DNA. The chain is Structure-specific endonuclease subunit SLX1 from Meyerozyma guilliermondii (strain ATCC 6260 / CBS 566 / DSM 6381 / JCM 1539 / NBRC 10279 / NRRL Y-324) (Yeast).